Here is a 131-residue protein sequence, read N- to C-terminus: Large ribosomal subunit protein bL17 (131 aa).

It belongs to the bacterial ribosomal protein bL17 family. In terms of assembly, part of the 50S ribosomal subunit. Contacts protein L32.

The polypeptide is Large ribosomal subunit protein bL17 (Azoarcus sp. (strain BH72)).